We begin with the raw amino-acid sequence, 182 residues long: Thioredoxin F-type, chloroplastic (182 aa).

The N-terminal 69 residues, 1-69 (MALNLCTSPK…SVRSSLETAG (69 aa)), are a transit peptide targeting the chloroplast. Residues 70–181 (PTVTVGKVTE…LVAAIDTVRS (112 aa)) enclose the Thioredoxin domain. Residues cysteine 106 and cysteine 109 each act as nucleophile in the active site. Cysteines 106 and 109 form a disulfide.

It belongs to the thioredoxin family. Plant F-type subfamily. In terms of assembly, forms a complex with heterodimeric ferredoxin-thioredoxin reductase (FTR) and ferredoxin.

It is found in the plastid. The protein resides in the chloroplast. Participates in various redox reactions through the reversible oxidation of the active center dithiol to a disulfide. The F form is known to activate a number of enzymes of the photosynthetic carbon cycle. This is Thioredoxin F-type, chloroplastic from Pisum sativum (Garden pea).